The following is a 287-amino-acid chain: Phosphatidylserine decarboxylase proenzyme (287 aa).

Catalysis depends on charge relay system; for autoendoproteolytic cleavage activity residues D90, H147, and S252. S252 (schiff-base intermediate with substrate; via pyruvic acid; for decarboxylase activity) is an active-site residue. Residue S252 is modified to Pyruvic acid (Ser); by autocatalysis.

Belongs to the phosphatidylserine decarboxylase family. PSD-B subfamily. Prokaryotic type I sub-subfamily. Heterodimer of a large membrane-associated beta subunit and a small pyruvoyl-containing alpha subunit. Pyruvate is required as a cofactor. Post-translationally, is synthesized initially as an inactive proenzyme. Formation of the active enzyme involves a self-maturation process in which the active site pyruvoyl group is generated from an internal serine residue via an autocatalytic post-translational modification. Two non-identical subunits are generated from the proenzyme in this reaction, and the pyruvate is formed at the N-terminus of the alpha chain, which is derived from the carboxyl end of the proenzyme. The autoendoproteolytic cleavage occurs by a canonical serine protease mechanism, in which the side chain hydroxyl group of the serine supplies its oxygen atom to form the C-terminus of the beta chain, while the remainder of the serine residue undergoes an oxidative deamination to produce ammonia and the pyruvoyl prosthetic group on the alpha chain. During this reaction, the Ser that is part of the protease active site of the proenzyme becomes the pyruvoyl prosthetic group, which constitutes an essential element of the active site of the mature decarboxylase.

It localises to the cell membrane. The catalysed reaction is a 1,2-diacyl-sn-glycero-3-phospho-L-serine + H(+) = a 1,2-diacyl-sn-glycero-3-phosphoethanolamine + CO2. The protein operates within phospholipid metabolism; phosphatidylethanolamine biosynthesis; phosphatidylethanolamine from CDP-diacylglycerol: step 2/2. In terms of biological role, catalyzes the formation of phosphatidylethanolamine (PtdEtn) from phosphatidylserine (PtdSer). The polypeptide is Phosphatidylserine decarboxylase proenzyme (Pseudomonas entomophila (strain L48)).